The chain runs to 228 residues: Triosephosphate isomerase (228 aa).

11 to 13 (NFK) contributes to the substrate binding site. The active-site Electrophile is the His95. The active-site Proton acceptor is the Glu143. Substrate is bound by residues Ile148, Gly183, and 204–205 (AS).

The protein belongs to the triosephosphate isomerase family. In terms of assembly, homotetramer; dimer of dimers.

It localises to the cytoplasm. It carries out the reaction D-glyceraldehyde 3-phosphate = dihydroxyacetone phosphate. It functions in the pathway carbohydrate biosynthesis; gluconeogenesis. The protein operates within carbohydrate degradation; glycolysis; D-glyceraldehyde 3-phosphate from glycerone phosphate: step 1/1. In terms of biological role, involved in the gluconeogenesis. Catalyzes stereospecifically the conversion of dihydroxyacetone phosphate (DHAP) to D-glyceraldehyde-3-phosphate (G3P). In Pyrococcus abyssi (strain GE5 / Orsay), this protein is Triosephosphate isomerase.